The following is a 363-amino-acid chain: DNA repair protein rlp1 (363 aa).

Belongs to the RecA family. RAD51 subfamily. Interacts with rdl1 and sws1.

It is found in the cytoplasm. It localises to the nucleus. Functionally, required for normal levels of meiotic recombination. Acts in the recombinational pathway of double-strand break (DSB) repair together with rhp51, rhp55 and rad22. Required for the full extent of DNA recombination and cell survival under condition of a replication fork collapse. This chain is DNA repair protein rlp1, found in Schizosaccharomyces pombe (strain 972 / ATCC 24843) (Fission yeast).